The chain runs to 503 residues: MAELLASLPAWAAVLLLFFATVSGSTGPRSRENRGASRIPSQFSEEERVAIKEALKGAIQIPTVSFSHEESNTTALAEFGEYIRKAFPTVFHSSLVQHEVVAKYSHLFTIQGSDPSLQPYMLMAHIDVVPAPEEGWEVPPFSGLERNGFIYGRGALDNKNSVMAILHALELLLIRNYSPKRSFFIALGHDEEVSGEKGAQKISALLQARGVQLAFLVDEGSFILEGFIPNLEKPVAMISVTEKGALDLMLQVNMTPGHSSAPPKETSIGILSAAVSRLEQTPMPNMFGGGPLKKTMKLLANEFSFPINIVLRNLWLFHPIVSRIMERNPITNALVRTTTALTMFNAGIKVNVIPPLAQATINCRIHPSQTVHEVLELVKNTVADDRVQLHVLRSFEPLPISPSDDQAMGYQLLQETIRSVFPEVDIVVPGICIANTDTRHYANITNGMYRFNPLPLNPQDFSGVHGINEKVSVQNYQNQVKFIFEFIQNADTYKEPVPHLHEL.

The N-terminal stretch at 1 to 24 (MAELLASLPAWAAVLLLFFATVSG) is a signal peptide. Asparagine 72 carries N-linked (GlcNAc...) asparagine glycosylation. Histidine 125 contributes to the Zn(2+) binding site. Aspartate 127 is an active-site residue. Zn(2+) is bound at residue aspartate 157. Catalysis depends on glutamate 191, which acts as the Proton acceptor. 2 residues coordinate Zn(2+): glutamate 192 and aspartate 218. N-linked (GlcNAc...) asparagine glycosylation occurs at asparagine 443. Histidine 465 contacts Zn(2+).

The protein belongs to the peptidase M20A family. Requires Zn(2+) as cofactor. In terms of tissue distribution, in addition to being detected in blood (at protein level), PM20D1 is also highly expressed in other tissues including brown adipocytes, liver and kidney. It is also expressed in small intestine, large intestine, heart and pancreas.

The protein resides in the secreted. The catalysed reaction is an N-acyl-L-amino acid + H2O = an L-alpha-amino acid + a carboxylate. It carries out the reaction an N-acyl-aromatic L-alpha-amino acid + H2O = an aromatic L-alpha-amino acid + a carboxylate. It catalyses the reaction N-(5Z,8Z,11Z,14Z)-eicosatetraenoyl-glycine + H2O = (5Z,8Z,11Z,14Z)-eicosatetraenoate + glycine. The enzyme catalyses N-hexadecanoyl-L-phenylalanine + H2O = hexadecanoate + L-phenylalanine. The catalysed reaction is N-octadecanoyl-L-phenylalanine + H2O = octadecanoate + L-phenylalanine. It carries out the reaction N-(4Z,7Z,10Z,13Z,16Z,19Z-docosahexaenoyl)-L-phenylalanine + H2O = (4Z,7Z,10Z,13Z,16Z,19Z)-docosahexaenoate + L-phenylalanine. It catalyses the reaction N-(9Z-octadecenoyl)-L-asparagine + H2O = L-asparagine + (9Z)-octadecenoate. The enzyme catalyses (9Z)-octadecenoate + glycine = N-(9Z-octadecenoyl)glycine + H2O. The catalysed reaction is N-(9Z-octadecenoyl)-L-lysine + H2O = L-lysine + (9Z)-octadecenoate. It carries out the reaction N-(9Z-octadecenoyl)-L-methionine + H2O = (9Z)-octadecenoate + L-methionine. It catalyses the reaction N-(9Z-octadecenoyl)-L-serine + H2O = L-serine + (9Z)-octadecenoate. The enzyme catalyses N-(9Z-octadecenoyl)-L-tryptophan + H2O = L-tryptophan + (9Z)-octadecenoate. The catalysed reaction is N-(9Z-octadecenoyl)-L-tyrosine + H2O = L-tyrosine + (9Z)-octadecenoate. It carries out the reaction N-(9Z-octadecenoyl)-L-glutamine + H2O = L-glutamine + (9Z)-octadecenoate. It catalyses the reaction N-(5Z,8Z,11Z,14Z-eicosatetraenoyl)-L-serine + H2O = (5Z,8Z,11Z,14Z)-eicosatetraenoate + L-serine. The enzyme catalyses (5Z,8Z,11Z,14Z)-eicosatetraenoate + L-phenylalanine = N-(5Z,8Z,11Z,14Z-eicosatetraenoyl)-L-phenylalanine + H2O. The catalysed reaction is N-(9Z-octadecenoyl)-L-leucine + H2O = L-leucine + (9Z)-octadecenoate. It carries out the reaction L-phenylalanine + (9Z)-octadecenoate = N-(9Z-octadecenoyl)-L-phenylalanine + H2O. It participates in amino-acid metabolism. It functions in the pathway energy metabolism; electron transfer. Its pathway is lipid metabolism; fatty acid metabolism. Lipoproteins are powerful coactivators of PM20D1 activity in vitro and NAA biosynthesis in vivo. Secreted enzyme that regulates the endogenous N-fatty acyl amino acid (NAAs) tissue and circulating levels by functioning as a bidirectional NAA synthase/hydrolase. It condenses free fatty acids and free amino acids to generate NAAs and bidirectionally catalyzes the reverse hydrolysis reaction. Some of these NAAs stimulate oxidative metabolism via mitochondrial uncoupling, increasing energy expenditure in a UPC1-independent manner. Thereby, this secreted protein may indirectly regulate whole body energy expenditure. PM20D1 circulates in tight association with both low- and high-density (LDL and HDL,respectively) lipoprotein particles. The polypeptide is N-fatty-acyl-amino acid synthase/hydrolase PM20D1 (Mus musculus (Mouse)).